We begin with the raw amino-acid sequence, 424 residues long: 5-methylthioadenosine/S-adenosylhomocysteine deaminase (424 aa).

Zn(2+) is bound by residues H60 and H62. Substrate-binding residues include E89 and H181. H208 contacts Zn(2+). Residues E211 and D296 each coordinate substrate. A Zn(2+)-binding site is contributed by D296.

Belongs to the metallo-dependent hydrolases superfamily. MTA/SAH deaminase family. Zn(2+) serves as cofactor.

The enzyme catalyses S-adenosyl-L-homocysteine + H2O + H(+) = S-inosyl-L-homocysteine + NH4(+). It carries out the reaction S-methyl-5'-thioadenosine + H2O + H(+) = S-methyl-5'-thioinosine + NH4(+). Catalyzes the deamination of 5-methylthioadenosine and S-adenosyl-L-homocysteine into 5-methylthioinosine and S-inosyl-L-homocysteine, respectively. Is also able to deaminate adenosine. The sequence is that of 5-methylthioadenosine/S-adenosylhomocysteine deaminase from Thermococcus onnurineus (strain NA1).